A 679-amino-acid polypeptide reads, in one-letter code: Single-strand DNA endonuclease ASTE1 (679 aa).

Positions 351–400 are interaction with SHLD2; that stretch reads TILPTQVENMQQPNAHRISQPIRQIIYGLLLNASPHLDKTSWNALPPQPL. Positions 625–645 are disordered; the sequence is RSNSKKKRQKKQNTSCSKNRG. Residues 626–635 are compositionally biased toward basic residues; the sequence is SNSKKKRQKK.

Belongs to the asteroid family. As to quaternary structure, interacts with SHLD1, SHLD2, SHLD3, RIF1 and MAD2L2/REV7.

Its function is as follows. Structure-specific DNA endonuclease that specifically cleaves single-stranded DNA and 3' overhang DNA. Contributes to the control of DNA double-strand break repair choice by antagonizing BRCA1-dependent homologous recombination (HR) and promoting non-homologous end-joining (NHEJ). Recruited to the single-stranded DNA ends by SHLD2 and cleaves the 3' exposed DNA ends, therefore inhibiting DNA end resection (necessary for HR) and promoting DNA end protection (necessary for NHEJ). This chain is Single-strand DNA endonuclease ASTE1 (ASTE1), found in Pongo abelii (Sumatran orangutan).